The chain runs to 330 residues: Serine/threonine-protein phosphatase beta isoform (330 aa).

Mn(2+) is bound by residues D63, H65, D91, and N123. Catalysis depends on H124, which acts as the Proton donor. H172 and H247 together coordinate Mn(2+). Positions 308 to 319 (GMNSSRPTTPQR) are enriched in polar residues. Positions 308 to 330 (GMNSSRPTTPQRSAPMLATNKKK) are disordered. A phosphothreonine mark is found at T315 and T316.

It belongs to the PPP phosphatase family. PP-1 subfamily. In terms of assembly, interacts with Nop17l. Interacts with uri; uri inhibits flw phosphatase activity. Mn(2+) serves as cofactor.

It carries out the reaction O-phospho-L-seryl-[protein] + H2O = L-seryl-[protein] + phosphate. The enzyme catalyses O-phospho-L-threonyl-[protein] + H2O = L-threonyl-[protein] + phosphate. Required for cell adhesion in non-muscle tissues and in maintenance of muscle attachment. Vital for larval development. This Drosophila melanogaster (Fruit fly) protein is Serine/threonine-protein phosphatase beta isoform (flw).